Consider the following 71-residue polypeptide: Mitotic-spindle organizing protein 1 (71 aa).

Belongs to the MOZART1 family. As to quaternary structure, part of the gamma-tubulin complex.

It localises to the cytoplasm. The protein resides in the cytoskeleton. Its subcellular location is the microtubule organizing center. The protein localises to the spindle pole body. Its function is as follows. Required for gamma-tubulin complex recruitment to the microtubule organizing center (MTOC). This chain is Mitotic-spindle organizing protein 1, found in Aspergillus clavatus (strain ATCC 1007 / CBS 513.65 / DSM 816 / NCTC 3887 / NRRL 1 / QM 1276 / 107).